We begin with the raw amino-acid sequence, 1180 residues long: DNA-directed RNA polymerase subunit beta (1180 aa).

Acidic residues predominate over residues 1154–1164 (EMKELDDEDEQ). A disordered region spans residues 1154–1180 (EMKELDDEDEQASDKLNLNIDSTESNV). Over residues 1167 to 1180 (DKLNLNIDSTESNV) the composition is skewed to polar residues.

This sequence belongs to the RNA polymerase beta chain family. In terms of assembly, the RNAP catalytic core consists of 2 alpha, 1 beta, 1 beta' and 1 omega subunit. When a sigma factor is associated with the core the holoenzyme is formed, which can initiate transcription.

The catalysed reaction is RNA(n) + a ribonucleoside 5'-triphosphate = RNA(n+1) + diphosphate. Its function is as follows. DNA-dependent RNA polymerase catalyzes the transcription of DNA into RNA using the four ribonucleoside triphosphates as substrates. This is DNA-directed RNA polymerase subunit beta from Halalkalibacterium halodurans (strain ATCC BAA-125 / DSM 18197 / FERM 7344 / JCM 9153 / C-125) (Bacillus halodurans).